We begin with the raw amino-acid sequence, 385 residues long: Succinate--CoA ligase [ADP-forming] subunit beta (385 aa).

One can recognise an ATP-grasp domain in the interval 9–244 (KALFRTFGVP…LDEEDPLEVE (236 aa)). ATP-binding positions include Lys-46, 53–55 (GRG), Glu-99, Gln-102, and Glu-107. 2 residues coordinate Mg(2+): Asn-199 and Asp-213. Substrate-binding positions include Asn-264 and 321 to 323 (GIL).

It belongs to the succinate/malate CoA ligase beta subunit family. Heterotetramer of two alpha and two beta subunits. Mg(2+) serves as cofactor.

The catalysed reaction is succinate + ATP + CoA = succinyl-CoA + ADP + phosphate. It catalyses the reaction GTP + succinate + CoA = succinyl-CoA + GDP + phosphate. It functions in the pathway carbohydrate metabolism; tricarboxylic acid cycle; succinate from succinyl-CoA (ligase route): step 1/1. Succinyl-CoA synthetase functions in the citric acid cycle (TCA), coupling the hydrolysis of succinyl-CoA to the synthesis of either ATP or GTP and thus represents the only step of substrate-level phosphorylation in the TCA. The beta subunit provides nucleotide specificity of the enzyme and binds the substrate succinate, while the binding sites for coenzyme A and phosphate are found in the alpha subunit. This is Succinate--CoA ligase [ADP-forming] subunit beta from Desulforapulum autotrophicum (strain ATCC 43914 / DSM 3382 / VKM B-1955 / HRM2) (Desulfobacterium autotrophicum).